The sequence spans 168 residues: Large ribosomal subunit protein uL10 (168 aa).

Belongs to the universal ribosomal protein uL10 family. As to quaternary structure, part of the ribosomal stalk of the 50S ribosomal subunit. The N-terminus interacts with L11 and the large rRNA to form the base of the stalk. The C-terminus forms an elongated spine to which L12 dimers bind in a sequential fashion forming a multimeric L10(L12)X complex.

Forms part of the ribosomal stalk, playing a central role in the interaction of the ribosome with GTP-bound translation factors. This chain is Large ribosomal subunit protein uL10, found in Acidovorax ebreus (strain TPSY) (Diaphorobacter sp. (strain TPSY)).